A 430-amino-acid polypeptide reads, in one-letter code: sn-glycerol-3-phosphate-binding periplasmic protein UgpB (430 aa).

A signal peptide spans 1-20 (MRLISISTTIAFGFAFQAQA). Residues Tyr62, Asp86, Ser141, Ser268, Gly302, Tyr341, and Arg392 each contribute to the sn-glycerol 3-phosphate site.

The protein belongs to the bacterial solute-binding protein 1 family. In terms of assembly, the complex is composed of two ATP-binding proteins (UgpC), two transmembrane proteins (UgpA and UgpE) and a solute-binding protein (UgpB).

It localises to the periplasm. Functionally, part of the ABC transporter complex UgpBAEC involved in sn-glycerol-3-phosphate (G3P) import. Binds G3P. In Rhizobium meliloti (strain 1021) (Ensifer meliloti), this protein is sn-glycerol-3-phosphate-binding periplasmic protein UgpB (ugpB).